A 356-amino-acid polypeptide reads, in one-letter code: Peptide chain release factor 1 (356 aa).

Gln-234 carries the post-translational modification N5-methylglutamine.

Belongs to the prokaryotic/mitochondrial release factor family. Post-translationally, methylated by PrmC. Methylation increases the termination efficiency of RF1.

The protein resides in the cytoplasm. Peptide chain release factor 1 directs the termination of translation in response to the peptide chain termination codons UAG and UAA. The chain is Peptide chain release factor 1 from Exiguobacterium sp. (strain ATCC BAA-1283 / AT1b).